The sequence spans 228 residues: 5'-methylthioadenosine/S-adenosylhomocysteine nucleosidase (228 aa).

Glu-11 serves as the catalytic Proton acceptor. Substrate-binding positions include Gly-77, Ile-151, and 172-173 (ME). Asp-196 serves as the catalytic Proton donor.

Belongs to the PNP/UDP phosphorylase family. MtnN subfamily.

It carries out the reaction S-adenosyl-L-homocysteine + H2O = S-(5-deoxy-D-ribos-5-yl)-L-homocysteine + adenine. The enzyme catalyses S-methyl-5'-thioadenosine + H2O = 5-(methylsulfanyl)-D-ribose + adenine. The catalysed reaction is 5'-deoxyadenosine + H2O = 5-deoxy-D-ribose + adenine. It functions in the pathway amino-acid biosynthesis; L-methionine biosynthesis via salvage pathway; S-methyl-5-thio-alpha-D-ribose 1-phosphate from S-methyl-5'-thioadenosine (hydrolase route): step 1/2. Its function is as follows. Catalyzes the irreversible cleavage of the glycosidic bond in both 5'-methylthioadenosine (MTA) and S-adenosylhomocysteine (SAH/AdoHcy) to adenine and the corresponding thioribose, 5'-methylthioribose and S-ribosylhomocysteine, respectively. Also cleaves 5'-deoxyadenosine, a toxic by-product of radical S-adenosylmethionine (SAM) enzymes, into 5-deoxyribose and adenine. This chain is 5'-methylthioadenosine/S-adenosylhomocysteine nucleosidase, found in Staphylococcus epidermidis (strain ATCC 12228 / FDA PCI 1200).